A 102-amino-acid chain; its full sequence is PqqA binding protein (102 aa).

This sequence belongs to the PqqD family. In terms of assembly, monomer. Interacts with PqqE.

It participates in cofactor biosynthesis; pyrroloquinoline quinone biosynthesis. In terms of biological role, functions as a PqqA binding protein and presents PqqA to PqqE, in the pyrroloquinoline quinone (PQQ) biosynthetic pathway. This chain is PqqA binding protein, found in Rhodopseudomonas palustris (strain BisB5).